The sequence spans 169 residues: Putative tRNA (cytidine(34)-2'-O)-methyltransferase (169 aa).

S-adenosyl-L-methionine contacts are provided by isoleucine 79, glycine 104, isoleucine 125, and serine 133.

Belongs to the class IV-like SAM-binding methyltransferase superfamily. RNA methyltransferase TrmH family. TrmL subfamily.

The protein localises to the cytoplasm. It catalyses the reaction cytidine(34) in tRNA + S-adenosyl-L-methionine = 2'-O-methylcytidine(34) in tRNA + S-adenosyl-L-homocysteine + H(+). The enzyme catalyses 5-carboxymethylaminomethyluridine(34) in tRNA(Leu) + S-adenosyl-L-methionine = 5-carboxymethylaminomethyl-2'-O-methyluridine(34) in tRNA(Leu) + S-adenosyl-L-homocysteine + H(+). In terms of biological role, could methylate the ribose at the nucleotide 34 wobble position in tRNA. This Listeria monocytogenes serotype 4b (strain F2365) protein is Putative tRNA (cytidine(34)-2'-O)-methyltransferase.